Here is a 486-residue protein sequence, read N- to C-terminus: Wax ester synthase/diacylglycerol acyltransferase 11 (486 aa).

Residues 1-192 (MGEDKKTARE…CNSGFFNKIW (192 aa)) lie on the Cytoplasmic side of the membrane. Catalysis depends on H144, which acts as the Proton acceptor. Residues 193 to 213 (WLFVGLWFILRLLFNTFVDIL) form a helical membrane-spanning segment. At 214 to 486 (MFALTIFVLR…LERGLYEIEV (273 aa)) the chain is on the extracellular side.

The protein in the N-terminal section; belongs to the long-chain O-acyltransferase family. As to expression, mostly expressed in inflorescences and flowers, especially at the periphery of petal epidermal cells.

The protein localises to the cell membrane. It is found in the endoplasmic reticulum membrane. It catalyses the reaction an acyl-CoA + a 1,2-diacyl-sn-glycerol = a triacyl-sn-glycerol + CoA. The catalysed reaction is a long chain fatty alcohol + a fatty acyl-CoA = a wax ester + CoA. The protein operates within glycerolipid metabolism; triacylglycerol biosynthesis. It participates in lipid metabolism. Functionally, bifunctional wax ester synthase/diacylglycerol acyltransferase. Involved in cuticular wax biosynthesis. Required for petals development, probably by mediating the production of fatty acids at the plasma membrane in the petal epidermis acting as lubricants that makes petal elongation smooth in narrow space between the sepals and the anthers inside floral buds. The polypeptide is Wax ester synthase/diacylglycerol acyltransferase 11 (Arabidopsis thaliana (Mouse-ear cress)).